We begin with the raw amino-acid sequence, 441 residues long: Tol-Pal system protein TolB (441 aa).

Residues 1–39 form the signal peptide; sequence MPTMTPAFSRASLSEALRSYGLALLLFLATLLAWQPAHA.

This sequence belongs to the TolB family. As to quaternary structure, the Tol-Pal system is composed of five core proteins: the inner membrane proteins TolA, TolQ and TolR, the periplasmic protein TolB and the outer membrane protein Pal. They form a network linking the inner and outer membranes and the peptidoglycan layer.

The protein resides in the periplasm. Functionally, part of the Tol-Pal system, which plays a role in outer membrane invagination during cell division and is important for maintaining outer membrane integrity. The sequence is that of Tol-Pal system protein TolB from Bordetella avium (strain 197N).